We begin with the raw amino-acid sequence, 196 residues long: Imidazole glycerol phosphate synthase subunit HisH (196 aa).

The Glutamine amidotransferase type-1 domain occupies 2–196 (KVAVIKYNAG…ERIIKNFLEL (195 aa)). Cys-77 acts as the Nucleophile in catalysis. Active-site residues include His-178 and Glu-180.

As to quaternary structure, heterodimer of HisH and HisF.

It is found in the cytoplasm. It catalyses the reaction 5-[(5-phospho-1-deoxy-D-ribulos-1-ylimino)methylamino]-1-(5-phospho-beta-D-ribosyl)imidazole-4-carboxamide + L-glutamine = D-erythro-1-(imidazol-4-yl)glycerol 3-phosphate + 5-amino-1-(5-phospho-beta-D-ribosyl)imidazole-4-carboxamide + L-glutamate + H(+). It carries out the reaction L-glutamine + H2O = L-glutamate + NH4(+). It participates in amino-acid biosynthesis; L-histidine biosynthesis; L-histidine from 5-phospho-alpha-D-ribose 1-diphosphate: step 5/9. IGPS catalyzes the conversion of PRFAR and glutamine to IGP, AICAR and glutamate. The HisH subunit catalyzes the hydrolysis of glutamine to glutamate and ammonia as part of the synthesis of IGP and AICAR. The resulting ammonia molecule is channeled to the active site of HisF. This is Imidazole glycerol phosphate synthase subunit HisH from Bacteroides fragilis (strain ATCC 25285 / DSM 2151 / CCUG 4856 / JCM 11019 / LMG 10263 / NCTC 9343 / Onslow / VPI 2553 / EN-2).